The following is a 247-amino-acid chain: Peroxisomal membrane protein 11A (247 aa).

Topologically, residues M1–R83 are cytoplasmic. Residues I84 to V105 form a helical membrane-spanning segment. Topologically, residues R106–P219 are lumenal. Residues G220–Y239 form a helical membrane-spanning segment. The interval G220–Y239 is required for homodimerization, interaction with PEX11G, and peroxisomal localization. The Cytoplasmic segment spans residues P240–Q247.

Belongs to the peroxin-11 family. In terms of assembly, homodimer. Heterodimer with PEX11G. Probably interacts with COPB2 and COPA. Interacts with PEX19. Interacts with FIS1.

The protein localises to the peroxisome membrane. May be involved in peroxisomal proliferation and may regulate peroxisomes division. May mediate binding of coatomer proteins to the peroxisomal membrane. Promotes membrane protrusion and elongation on the peroxisomal surface. The polypeptide is Peroxisomal membrane protein 11A (PEX11A) (Bos taurus (Bovine)).